The sequence spans 155 residues: 17.4 kDa class III heat shock protein (155 aa).

The sHSP domain maps to 35–155 (GRGSSNNIPI…KPKTVQIAVS (121 aa)).

Belongs to the small heat shock protein (HSP20) family. May form oligomeric structures.

The protein localises to the cytoplasm. This chain is 17.4 kDa class III heat shock protein (HSP17.4B), found in Arabidopsis thaliana (Mouse-ear cress).